We begin with the raw amino-acid sequence, 322 residues long: Acetyl-coenzyme A carboxylase carboxyl transferase subunit alpha (322 aa).

The 264-residue stretch at 30–293 (AVDISAEILR…KKALQDSLKL (264 aa)) folds into the CoA carboxyltransferase C-terminal domain.

This sequence belongs to the AccA family. As to quaternary structure, acetyl-CoA carboxylase is a heterohexamer composed of biotin carboxyl carrier protein (AccB), biotin carboxylase (AccC) and two subunits each of ACCase subunit alpha (AccA) and ACCase subunit beta (AccD).

The protein localises to the cytoplasm. It catalyses the reaction N(6)-carboxybiotinyl-L-lysyl-[protein] + acetyl-CoA = N(6)-biotinyl-L-lysyl-[protein] + malonyl-CoA. It functions in the pathway lipid metabolism; malonyl-CoA biosynthesis; malonyl-CoA from acetyl-CoA: step 1/1. In terms of biological role, component of the acetyl coenzyme A carboxylase (ACC) complex. First, biotin carboxylase catalyzes the carboxylation of biotin on its carrier protein (BCCP) and then the CO(2) group is transferred by the carboxyltransferase to acetyl-CoA to form malonyl-CoA. The sequence is that of Acetyl-coenzyme A carboxylase carboxyl transferase subunit alpha from Nitrosospira multiformis (strain ATCC 25196 / NCIMB 11849 / C 71).